The primary structure comprises 162 residues: MSDKIGLFTGSFDPMTNGHLDMIERASRLFDKLYVGIFFNPHKQGFLPLENRKRGLEKAVKHLGNVKVVSSHDELVVDVAKRLGATCLVRGLRNASDLQYEASFDYYNHQLSSDIETIYLHSRPEHLYISSSGVRELLKFGQDIACYVPESILEEIRNEKKD.

Position 11 (S11) interacts with substrate. Residues 11 to 12 (SF) and H19 contribute to the ATP site. 3 residues coordinate substrate: K43, V76, and R90. Residues 91–93 (GLR), E101, and 126–132 (HLYISSS) each bind ATP.

This sequence belongs to the bacterial CoaD family. In terms of assembly, homohexamer. Requires Mg(2+) as cofactor.

Its subcellular location is the cytoplasm. The catalysed reaction is (R)-4'-phosphopantetheine + ATP + H(+) = 3'-dephospho-CoA + diphosphate. Its pathway is cofactor biosynthesis; coenzyme A biosynthesis; CoA from (R)-pantothenate: step 4/5. Reversibly transfers an adenylyl group from ATP to 4'-phosphopantetheine, yielding dephospho-CoA (dPCoA) and pyrophosphate. In Streptococcus pneumoniae (strain ATCC 700669 / Spain 23F-1), this protein is Phosphopantetheine adenylyltransferase.